Here is a 111-residue protein sequence, read N- to C-terminus: UPF0060 membrane protein Aave_2845 (111 aa).

Helical transmembrane passes span 7 to 27 (FLLY…PWLW), 33 to 53 (SAWL…LLTL), 63 to 83 (AAYG…VDGI), and 90 to 110 (LAGA…PRGA).

Belongs to the UPF0060 family.

It is found in the cell inner membrane. This chain is UPF0060 membrane protein Aave_2845, found in Paracidovorax citrulli (strain AAC00-1) (Acidovorax citrulli).